The sequence spans 2546 residues: Formin-J (2546 aa).

Disordered stretches follow at residues 1 to 40, 61 to 108, 188 to 270, 369 to 414, 502 to 541, 802 to 849, 879 to 898, 987 to 1101, 1485 to 1529, 1558 to 1601, 1659 to 1775, 1840 to 1869, and 2014 to 2033; these read MEEN…SFVK, ENSN…PLSE, KNIT…PNSA, TTNN…SSSS, TNSF…TPNS, SSIS…NTRK, TSVP…NNNN, TTNN…GGIG, PKSK…ASLS, KRSK…FKSP, INNI…KVNS, VPTT…ETQS, and SNLS…SSLE. 2 stretches are compositionally biased toward low complexity: residues 16–37 and 62–98; these read NNNE…SSSS and NSNN…NSTS. Polar residues-rich tracts occupy residues 99–108 and 188–198; these read GSKDNTPLSE and KNITPSKNNSP. 2 stretches are compositionally biased toward low complexity: residues 203–237 and 247–270; these read NNNN…NNNN and NKNS…PNSA. The span at 377-389 shows a compositional bias: polar residues; that stretch reads AESLTTYSESSEI. 2 stretches are compositionally biased toward low complexity: residues 390 to 414 and 502 to 513; these read STDS…SSSS and TNSFGSSTTTTI. Residues 391–444 enclose the FHA domain; it reads TDSTGVCSSSSSTSSTLSSKSSSSSSFNKFMEFLLIYIEDNDSTNGTWVNGNKL. Positions 457-963 constitute a GBD/FH3 domain; that stretch reads KITLSTPDFS…SSISNEQEYQ (507 aa). 2 stretches are compositionally biased toward polar residues: residues 879–891 and 992–1007; these read TSVP…KNPL and SSAK…NKSP. Over residues 1033–1042 the composition is skewed to pro residues; that stretch reads VPPPPPPPPG. A compositionally biased stretch (low complexity) spans 1043-1056; it reads GNNNNESDVPSSSG. Residues 1057 to 1097 are compositionally biased toward pro residues; the sequence is GPPPPPPPPPPPGKSSGGGPPPPPPPPPKGGKGGPPPPPPI. Residues 1072–1098 enclose the FH1 domain; the sequence is SGGGPPPPPPPPPKGGKGGPPPPPPIG. Residues 1106–1495 form the FH2 domain; it reads KVKEEQPSVP…KSKKYQEQQN (390 aa). Residues 1492 to 1502 are compositionally biased toward polar residues; sequence EQQNKPTQNND. Over residues 1507–1529 the composition is skewed to low complexity; that stretch reads SKLSNLPSSSSINDESSSSASLS. The region spanning 1563-1593 is the DAD domain; the sequence is EQEPVVEPIQITPKVGSAASAEPSPSIKSRD. A compositionally biased stretch (low complexity) spans 1665–1679; the sequence is SSSSSSSSSSSSSSS. Positions 1687-1717 are enriched in basic and acidic residues; sequence HNTESEIKKEFISNSSMDKDKEKIKEKEKGT. Residues 1732–1745 are compositionally biased toward low complexity; the sequence is KSTTTSPSSSSSKK. A compositionally biased stretch (polar residues) spans 1746-1757; it reads QIPSLSECLQES. Composition is skewed to low complexity over residues 1763–1775 and 1841–1853; these read RSSS…KVNS and PTTT…TTQT. The stretch at 2067-2118 forms a coiled coil; it reads IDDNQQKQQKQQQQQQQQQQQQQQLPQPQQQQQQQQQQQQQQQQQQQQQQQQ. Over residues 2121-2154 the composition is skewed to low complexity; sequence QQSTTTTTISTHHPQLKQVQPQSPSSLSQQPTQQ. Disordered stretches follow at residues 2121-2369, 2381-2473, and 2485-2510; these read QQST…PKTV, SHKK…SYSS, and SPSS…LKTP. Residues 2160–2179 are compositionally biased toward polar residues; it reads QPSSPLQSHYKPQQKPQTTY. Low complexity-rich tracts occupy residues 2188–2206 and 2237–2256; these read ANPF…SNAS and SSAS…TPLS. Over residues 2274–2287 the composition is skewed to polar residues; the sequence is TPPSSSISNSTATT. Positions 2302 to 2315 are enriched in low complexity; sequence SPSSSSLEQSSNAS. The segment covering 2332–2342 has biased composition (basic residues); that stretch reads FKKHKKSHSKS. Composition is skewed to low complexity over residues 2388 to 2439, 2459 to 2473, and 2485 to 2497; these read VDQS…SSSS, NISS…SYSS, and SPSS…KPSP. Positions 2499–2508 are enriched in polar residues; that stretch reads AVSSTSSTLK.

It belongs to the formin homology family. Diaphanous subfamily. In terms of assembly, interacts (via GBD/FH3 domain) with activated Rho-GTPases.

Its function is as follows. Formins play an important role in the nucleation of actin and the formation of linear actin filaments. The polypeptide is Formin-J (forJ) (Dictyostelium discoideum (Social amoeba)).